Consider the following 35-residue polypeptide: Augerpeptide hheTx5 (35 aa).

Post-translationally, contains 4 disulfide bonds. Expressed by the venom duct.

It localises to the secreted. This is Augerpeptide hheTx5 from Hastula hectica (Sea snail).